The chain runs to 482 residues: tRNA sulfurtransferase (482 aa).

The region spanning 61 to 165 is the THUMP domain; the sequence is LAIRDALTRI…DDRLLLIKGR (105 aa). ATP contacts are provided by residues 183–184, K265, G287, and Q296; that span reads LI. The cysteines at positions 344 and 456 are disulfide-linked. One can recognise a Rhodanese domain in the interval 404 to 482; the sequence is FGPNDVILDI…GFNNVKVYRP (79 aa). C456 serves as the catalytic Cysteine persulfide intermediate.

It belongs to the ThiI family.

The protein resides in the cytoplasm. It carries out the reaction [ThiI sulfur-carrier protein]-S-sulfanyl-L-cysteine + a uridine in tRNA + 2 reduced [2Fe-2S]-[ferredoxin] + ATP + H(+) = [ThiI sulfur-carrier protein]-L-cysteine + a 4-thiouridine in tRNA + 2 oxidized [2Fe-2S]-[ferredoxin] + AMP + diphosphate. It catalyses the reaction [ThiS sulfur-carrier protein]-C-terminal Gly-Gly-AMP + S-sulfanyl-L-cysteinyl-[cysteine desulfurase] + AH2 = [ThiS sulfur-carrier protein]-C-terminal-Gly-aminoethanethioate + L-cysteinyl-[cysteine desulfurase] + A + AMP + 2 H(+). It participates in cofactor biosynthesis; thiamine diphosphate biosynthesis. Catalyzes the ATP-dependent transfer of a sulfur to tRNA to produce 4-thiouridine in position 8 of tRNAs, which functions as a near-UV photosensor. Also catalyzes the transfer of sulfur to the sulfur carrier protein ThiS, forming ThiS-thiocarboxylate. This is a step in the synthesis of thiazole, in the thiamine biosynthesis pathway. The sulfur is donated as persulfide by IscS. The sequence is that of tRNA sulfurtransferase from Escherichia coli O45:K1 (strain S88 / ExPEC).